The sequence spans 966 residues: Dynamin-like GTPase OPA1, mitochondrial (966 aa).

The transit peptide at 1-86 (MLRAGSVVTC…GGHGYQQHRT (86 aa)) directs the protein to the mitochondrion. Over 87–95 (FWVARLAAR) the chain is Mitochondrial matrix. Residues 96–112 (LLKLRYILLGSAVGGGY) form a helical membrane-spanning segment. Residues 113-776 (TAKKTYDEWK…SVIADMVGPD (664 aa)) lie on the Mitochondrial intermembrane side of the membrane. The interval 189 to 217 (ESALRAPDVPPASAAMADSGDKQFKKSSD) is disordered. Residues 207–217 (SGDKQFKKSSD) are compositionally biased toward basic and acidic residues. Residues 213–259 (KKSSDKEKVDQLQEELLRTQLKYQRMLERLEKENKELRKVVLQKDDK) are a coiled coil. The Dynamin-type G domain maps to 291-567 (QDHLPRVVVV…FWKMVRESVE (277 aa)). The interval 301–308 (GDQSAGKT) is G1 motif. 6 residues coordinate GTP: S304, G306, K307, T308, S309, and G323. T308 serves as a coordination point for Mg(2+). The segment at 327-330 (MMTR) is G2 motif. Residues T329 and D404 each coordinate Mg(2+). The tract at residues 404–407 (DLPG) is G3 motif. A G4 motif region spans residues 473 to 476 (TKVD). Residues K474, D476, and T509 each coordinate GTP. A G5 motif region spans residues 507–510 (VVTG). Stalk region stretches follow at residues 595–842 (DRNE…IKDT) and 880–934 (CNDV…VQLI). Positions 742–862 (TDKPQWDAAI…QKALLHCNLC (121 aa)) are paddle region. An intramembrane segment occupies 777–787 (WKQRWMSWKNR). The Mitochondrial intermembrane segment spans residues 788–966 (TPEQHTRNET…AFIEALHKEK (179 aa)). A disulfide bridge connects residues C862 and C880. The stretch at 901 to 966 (RQQLTNTEVR…AFIEALHKEK (66 aa)) forms a coiled coil.

The protein belongs to the TRAFAC class dynamin-like GTPase superfamily. Dynamin/Fzo/YdjA family. As to quaternary structure, oligomeric complex consisting of membrane-bound and soluble forms of OPA1. Post-translationally, cleaved by OMA1 or YME1L downstream of the transmembrane region in response to different signals to generate soluble forms. Cleaved by OMA1 at position S1 following stress conditions, generating the short soluble form (Dynamin-like GTPase OPA1, short form; S-OPA1).

The protein resides in the mitochondrion inner membrane. It is found in the mitochondrion intermembrane space. The catalysed reaction is GTP + H2O = GDP + phosphate + H(+). In terms of biological role, dynamin-related GTPase that is essential for normal mitochondrial morphology by mediating fusion of the mitochondrial inner membranes, regulating cristae morphology and maintaining respiratory chain function. Exists in two forms: the transmembrane, long form (Dynamin-like GTPase OPA1, long form; L-OPA1), which is tethered to the inner mitochondrial membrane, and the short soluble form (Dynamin-like GTPase OPA1, short form; S-OPA1), which results from proteolytic cleavage and localizes in the intermembrane space. Both forms (L-OPA1 and S-OPA1) cooperate to catalyze the fusion of the mitochondrial inner membrane. The equilibrium between L-OPA1 and S-OPA1 is essential: excess levels of S-OPA1, produced by cleavage by OMA1 following loss of mitochondrial membrane potential, lead to an impaired equilibrium between L-OPA1 and S-OPA1, inhibiting mitochondrial fusion. The balance between L-OPA1 and S-OPA1 also influences cristae shape and morphology. Its role in mitochondrial morphology is required for mitochondrial genome maintenance. Its function is as follows. Constitutes the transmembrane long form (L-OPA1) that plays a central role in mitochondrial inner membrane fusion and cristae morphology. L-OPA1 and the soluble short form (S-OPA1) form higher-order helical assemblies that coordinate the fusion of mitochondrial inner membranes. Inner membrane-anchored L-OPA1 molecules initiate membrane remodeling by recruiting soluble S-OPA1 to rapidly polymerize into a flexible cylindrical scaffold encaging the mitochondrial inner membrane. Once at the membrane surface, the formation of S-OPA1 helices induce bilayer curvature. OPA1 dimerization through the paddle region, which inserts into cardiolipin-containing membrane, promotes GTP hydrolysis and the helical assembly of a flexible OPA1 lattice on the membrane, which drives membrane curvature and mitochondrial fusion. Plays a role in the maintenance and remodeling of mitochondrial cristae, some invaginations of the mitochondrial inner membrane that provide an increase in the surface area. Probably acts by forming helical filaments at the inside of inner membrane tubes with the shape and dimensions of crista junctions. Functionally, constitutes the soluble short form (S-OPA1) generated by cleavage by OMA1, which plays a central role in mitochondrial inner membrane fusion and cristae morphology. The transmembrane long form (L-OPA1) and the S-OPA1 form higher-order helical assemblies that coordinate the fusion of mitochondrial inner membranes. Inner membrane-anchored L-OPA1 molecules initiate membrane remodeling by recruiting soluble S-OPA1 to rapidly polymerize into a flexible cylindrical scaffold encaging the mitochondrial inner membrane. Once at the membrane surface, the formation of S-OPA1 helices induce bilayer curvature. OPA1 dimerization through the paddle region, which inserts into cardiolipin-containing membrane, promotes GTP hydrolysis and the helical assembly of a flexible OPA1 lattice on the membrane, which drives membrane curvature and mitochondrial fusion. Excess levels of S-OPA1 produced by cleavage by OMA1 following stress conditions that induce loss of mitochondrial membrane potential, lead to an impaired equilibrium between L-OPA1 and S-OPA1, thereby inhibiting mitochondrial fusion. Plays a role in the maintenance and remodeling of mitochondrial cristae, some invaginations of the mitochondrial inner membrane that provide an increase in the surface area. Probably acts by forming helical filaments at the inside of inner membrane tubes with the shape and dimensions of crista junctions. In Danio rerio (Zebrafish), this protein is Dynamin-like GTPase OPA1, mitochondrial.